We begin with the raw amino-acid sequence, 72 residues long: Toxin Acra II-1 (72 aa).

Residues 3 to 67 form the LCN-type CS-alpha/beta domain; that stretch reads VPGNYPLNTY…VWNAAKNYCK (65 aa). Disulfide bonds link cysteine 18–cysteine 41, cysteine 27–cysteine 46, and cysteine 31–cysteine 48.

Belongs to the long (3 C-C) scorpion toxin superfamily. Sodium channel inhibitor family. Beta subfamily. Expressed by the venom gland.

Its subcellular location is the secreted. In terms of biological role, binds to sodium channels (Nav) and affects the channel activation process. This chain is Toxin Acra II-1, found in Androctonus crassicauda (Arabian fat-tailed scorpion).